A 240-amino-acid polypeptide reads, in one-letter code: Splicing factor rtf2 (240 aa).

2 disordered regions span residues 1–22 and 181–240; these read MGND…GKVP and SLNK…RVKI. Basic residues predominate over residues 185-210; sequence ASKKSNKNGDKKRKHVSKSNSKHAKH. Composition is skewed to basic and acidic residues over residues 211–224 and 231–240; these read ELRT…ENVK and DMERVKRVKI.

It belongs to the rtf2 family. In terms of assembly, interacts with pcn1.

It is found in the nucleus. In terms of biological role, putative splicing factor that is required for the correct splicing of a subset of pre-mRNAs. Required for the correct splicing of rtf1, a replication termination factor that mediates site-specific replication termination at replication barrier RTS1. The polypeptide is Splicing factor rtf2 (Schizosaccharomyces pombe (strain 972 / ATCC 24843) (Fission yeast)).